Consider the following 943-residue polypeptide: Sodium- and chloride-dependent GABA transporter ine (943 aa).

The Cytoplasmic segment spans residues 1–345 (MAENKDVSQV…RQQHWANKMQ (345 aa)). Residues 103-122 (HKQSPLRHTSVRTRPSSEVL) form a disordered region. The next 3 helical transmembrane spans lie at 346 to 366 (FVLACIGYSVGLGNVWRFPYM), 373 to 393 (GVFLVPYCIILFICSIPLLFM), and 418 to 438 (GAGLASVVVSFLMSTYYSVII). Residues 439–510 (GYSIYYFFTS…GLEYPGMMRW (72 aa)) lie on the Extracellular side of the membrane. Asn476 is a glycosylation site (N-linked (GlcNAc...) asparagine). The next 9 helical transmembrane spans lie at 511–531 (ELFACLICAWLMVYFATWKSI), 539–559 (YFTATFPFVLIIILMVRAVTL), 591–607 (FNSLGITFGSMISFASY), 618–638 (TVAVSAVNMITSLLVGIFAFS), 679–699 (WAVMFFFMLLCLGLNSQFAIV), 723–743 (IVVLFVCVISCLFGMPNIIQG), 754–774 (YAASVTIMFLAFCQMIAIAWF), 799–819 (CWLVLGPCLLFAIWVLSLINY), and 836–856 (YGIGWMFASFSLICIPGYAVI). The Cytoplasmic portion of the chain corresponds to 857–943 (NFLRSSGDTF…HAEAGGPCGQ (87 aa)).

The protein belongs to the sodium:neurotransmitter symporter (SNF) (TC 2.A.22) family. In terms of tissue distribution, expressed both maternally and zygotically. Developing embryos exhibit expression in the posterior hindgut, foregut, midgut, Malpighian tubules, anal plate, Garland cells, and a subset of cells in the central nervous system. Central nervous system expression is seen in segmentally repeating in cells flanking the midline of the ventral ganglion. Isoform A and isoform B are colocalized in both the nervous system and the fluid reabsorption system.

It is found in the membrane. Functionally, plays a role in neuronal membrane excitation, important for normal response properties of the photoreceptor. Able to control excitability from either neurons or glia cells. Ine negatively regulates neuronal sodium channels. Controls neurotransmitter-mediated signaling pathways associated with the structure of the larval peripheral nerve, ine and eag control perineurial glial growth through partially redundant pathways. Isoform A and isoform B are both functional, although isoform A functions with greater efficiency. Has a role in osmolyte transport within the Malpighian tubule and hindgut. The sequence is that of Sodium- and chloride-dependent GABA transporter ine from Drosophila melanogaster (Fruit fly).